A 722-amino-acid chain; its full sequence is Probable glycerol-3-phosphate dehydrogenase, mitochondrial (722 aa).

The transit peptide at 1–43 directs the protein to the mitochondrion; the sequence is MSWVRFTKTGVAVVATSAAAVLALDMTNERRFQRQVKDHFRTV. Residue 76–104 coordinates FAD; it reads DVLIIGGGATGAGVALDAQTRGLKTALVE. EF-hand domains are found at residues 624–659 and 660–695; these read EEMQ…HNQK and IDER…LKGG. Ca(2+) is bound by residues aspartate 673, asparagine 675, asparagine 677, glutamate 679, and glutamate 684.

This sequence belongs to the FAD-dependent glycerol-3-phosphate dehydrogenase family. FAD is required as a cofactor.

Its subcellular location is the mitochondrion. The enzyme catalyses a quinone + sn-glycerol 3-phosphate = dihydroxyacetone phosphate + a quinol. It functions in the pathway polyol metabolism; glycerol degradation via glycerol kinase pathway; glycerone phosphate from sn-glycerol 3-phosphate (anaerobic route): step 1/1. Calcium-binding enhances the activity of the enzyme. The chain is Probable glycerol-3-phosphate dehydrogenase, mitochondrial from Caenorhabditis elegans.